Here is a 123-residue protein sequence, read N- to C-terminus: Ribosome-binding factor A (123 aa).

It belongs to the RbfA family. As to quaternary structure, monomer. Binds 30S ribosomal subunits, but not 50S ribosomal subunits or 70S ribosomes.

The protein localises to the cytoplasm. Its function is as follows. One of several proteins that assist in the late maturation steps of the functional core of the 30S ribosomal subunit. Associates with free 30S ribosomal subunits (but not with 30S subunits that are part of 70S ribosomes or polysomes). Required for efficient processing of 16S rRNA. May interact with the 5'-terminal helix region of 16S rRNA. This Acetivibrio thermocellus (strain ATCC 27405 / DSM 1237 / JCM 9322 / NBRC 103400 / NCIMB 10682 / NRRL B-4536 / VPI 7372) (Clostridium thermocellum) protein is Ribosome-binding factor A.